Here is a 303-residue protein sequence, read N- to C-terminus: Probable 5-dehydro-4-deoxyglucarate dehydratase (303 aa).

The protein belongs to the DapA family.

It carries out the reaction 5-dehydro-4-deoxy-D-glucarate + H(+) = 2,5-dioxopentanoate + CO2 + H2O. The protein operates within carbohydrate acid metabolism; D-glucarate degradation; 2,5-dioxopentanoate from D-glucarate: step 2/2. In Agrobacterium fabrum (strain C58 / ATCC 33970) (Agrobacterium tumefaciens (strain C58)), this protein is Probable 5-dehydro-4-deoxyglucarate dehydratase.